The following is a 146-amino-acid chain: Hemoglobin subunit beta (146 aa).

Val1 bears the N-acetylvaline mark. Residues 2–146 (HLTGEEKSAV…VANALAHKYH (145 aa)) enclose the Globin domain. At Thr12 the chain carries Phosphothreonine. Residue Ser44 is modified to Phosphoserine. Lys59 bears the N6-acetyllysine mark. His63 contacts heme b. Lys82 carries the post-translational modification N6-acetyllysine. His92 contributes to the heme b binding site. S-nitrosocysteine is present on Cys93. Residue Lys144 is modified to N6-acetyllysine.

It belongs to the globin family. In terms of assembly, heterotetramer of two alpha chains and two beta chains. In terms of tissue distribution, red blood cells.

Functionally, involved in oxygen transport from the lung to the various peripheral tissues. This Phoca vitulina (Harbor seal) protein is Hemoglobin subunit beta (HBB).